Here is a 152-residue protein sequence, read N- to C-terminus: Nucleoside diphosphate kinase (152 aa).

ATP is bound by residues Lys-12, Phe-60, Arg-88, Thr-94, Arg-105, and Asn-115. Residue His-118 is the Pros-phosphohistidine intermediate of the active site.

The protein belongs to the NDK family. In terms of assembly, homotrimer. It depends on Mg(2+) as a cofactor.

The enzyme catalyses a 2'-deoxyribonucleoside 5'-diphosphate + ATP = a 2'-deoxyribonucleoside 5'-triphosphate + ADP. The catalysed reaction is a ribonucleoside 5'-diphosphate + ATP = a ribonucleoside 5'-triphosphate + ADP. In terms of biological role, major role in the synthesis of nucleoside triphosphates other than ATP. The ATP gamma phosphate is transferred to the NDP beta phosphate via a ping-pong mechanism, using a phosphorylated active-site intermediate. The polypeptide is Nucleoside diphosphate kinase (ndk-1) (Neurospora crassa (strain ATCC 24698 / 74-OR23-1A / CBS 708.71 / DSM 1257 / FGSC 987)).